A 398-amino-acid polypeptide reads, in one-letter code: MNYNKKSIEDIDVKGKKVLVRCDFNVPLNEGKITDENRLVGALPTIKYLMGKGAKIILCSHMGKPKGEPKKELSLLPVAKRLSEMLNKEVIFADDDNVVGENAKRAVEDMKDGDVVLLQNTRYRKEETKNEEVFSKELASLADVFVNDAFGTAHRAHCSTVGVTNYLKEAACGYLIQKELKFLGNAVEKPERPFVAILGGAKVSDKINVINNLLDKVDTLIIGGGMGYTFLKAQGYTIGNSLVEEDKVEYSKEMIDKAKEKGVNLLLPIDNVVADKFDKDASPVVTEDQNIGEGYMGLDIGPKTAKIYSDAIKSAKTVVWNGPMGVFEFKSFANGTIEVAKAMADSDAVTIIGGGDSAAAVNILGFGDKMTHISTGGGASLEFLEGKELPGIAALNDK.

Substrate-binding positions include 23 to 25 (DFN), Arg-38, 61 to 64 (HMGK), Arg-122, and Arg-155. ATP contacts are provided by residues Lys-206, Gly-297, Glu-328, and 354–357 (GGDS).

This sequence belongs to the phosphoglycerate kinase family. In terms of assembly, monomer.

It localises to the cytoplasm. It catalyses the reaction (2R)-3-phosphoglycerate + ATP = (2R)-3-phospho-glyceroyl phosphate + ADP. Its pathway is carbohydrate degradation; glycolysis; pyruvate from D-glyceraldehyde 3-phosphate: step 2/5. This is Phosphoglycerate kinase from Clostridium botulinum (strain Okra / Type B1).